The following is a 236-amino-acid chain: Cytochrome b-c1 complex subunit Rieske-4, mitochondrial (236 aa).

A mitochondrion-targeting transit peptide spans 1–24 (MINFGSCWGLASVTSNSFSIISGF). The Mitochondrial matrix segment spans residues 25 to 73 (SSNSVSHAHDMGLVPDLPPTVAAIKNPTSKIVYDEHNHERYPPGDPSKR). A helical membrane pass occupies residues 74-96 (AFAYFVLTGGRFVYASLVRLLIL). Topologically, residues 97-236 (KFVLSMSASK…FLEENKLLIG (140 aa)) are mitochondrial intermembrane. The Rieske domain occupies 146 to 234 (INLANSVDLG…YSFLEENKLL (89 aa)). Positions 179, 181, 198, and 201 each coordinate [2Fe-2S] cluster. The cysteines at positions 184 and 200 are disulfide-linked.

It belongs to the Rieske iron-sulfur protein family. Component of the ubiquinol-cytochrome c oxidoreductase (cytochrome b-c1 complex, complex III, CIII), a multisubunit enzyme composed of 3 respiratory subunits cytochrome b, cytochrome c1 and Rieske protein, 2 core protein subunits, and several low-molecular weight protein subunits. The complex exists as an obligatory dimer and forms supercomplexes (SCs) in the inner mitochondrial membrane with cytochrome c oxidase (complex IV, CIV). Requires [2Fe-2S] cluster as cofactor.

The protein localises to the mitochondrion inner membrane. It catalyses the reaction a quinol + 2 Fe(III)-[cytochrome c](out) = a quinone + 2 Fe(II)-[cytochrome c](out) + 2 H(+)(out). In terms of biological role, component of the ubiquinol-cytochrome c oxidoreductase, a multisubunit transmembrane complex that is part of the mitochondrial electron transport chain which drives oxidative phosphorylation. The respiratory chain contains 3 multisubunit complexes succinate dehydrogenase (complex II, CII), ubiquinol-cytochrome c oxidoreductase (cytochrome b-c1 complex, complex III, CIII) and cytochrome c oxidase (complex IV, CIV), that cooperate to transfer electrons derived from NADH and succinate to molecular oxygen, creating an electrochemical gradient over the inner membrane that drives transmembrane transport and the ATP synthase. The cytochrome b-c1 complex catalyzes electron transfer from ubiquinol to cytochrome c, linking this redox reaction to translocation of protons across the mitochondrial inner membrane, with protons being carried across the membrane as hydrogens on the quinol. In the process called Q cycle, 2 protons are consumed from the matrix, 4 protons are released into the intermembrane space and 2 electrons are passed to cytochrome c. The Rieske protein is a catalytic core subunit containing a [2Fe-2S] iron-sulfur cluster. It cycles between 2 conformational states during catalysis to transfer electrons from the quinol bound in the Q(0) site in cytochrome b to cytochrome c1. The chain is Cytochrome b-c1 complex subunit Rieske-4, mitochondrial from Nicotiana tabacum (Common tobacco).